The chain runs to 370 residues: Spermidine/putrescine import ATP-binding protein PotA (370 aa).

The ABC transporter domain maps to 11 to 241 (IELRSITKSY…PKNLFVAKFI (231 aa)). 43–50 (GPSGCGKT) is an ATP binding site.

It belongs to the ABC transporter superfamily. Spermidine/putrescine importer (TC 3.A.1.11.1) family. As to quaternary structure, the complex is composed of two ATP-binding proteins (PotA), two transmembrane proteins (PotB and PotC) and a solute-binding protein (PotD).

It is found in the cell inner membrane. It carries out the reaction ATP + H2O + polyamine-[polyamine-binding protein]Side 1 = ADP + phosphate + polyamineSide 2 + [polyamine-binding protein]Side 1.. Its function is as follows. Part of the ABC transporter complex PotABCD involved in spermidine/putrescine import. Responsible for energy coupling to the transport system. The polypeptide is Spermidine/putrescine import ATP-binding protein PotA (Pasteurella multocida (strain Pm70)).